Reading from the N-terminus, the 469-residue chain is Glutamate--tRNA ligase (469 aa).

Positions 9–19 (PSPTGFLHVGG) match the 'HIGH' region motif. 4 residues coordinate Zn(2+): Cys-98, Cys-100, Cys-125, and Asp-127. Positions 236-240 (KLSKR) match the 'KMSKS' region motif. Lys-239 provides a ligand contact to ATP.

This sequence belongs to the class-I aminoacyl-tRNA synthetase family. Glutamate--tRNA ligase type 1 subfamily. Monomer. Zn(2+) serves as cofactor.

It is found in the cytoplasm. It catalyses the reaction tRNA(Glu) + L-glutamate + ATP = L-glutamyl-tRNA(Glu) + AMP + diphosphate. Its function is as follows. Catalyzes the attachment of glutamate to tRNA(Glu) in a two-step reaction: glutamate is first activated by ATP to form Glu-AMP and then transferred to the acceptor end of tRNA(Glu). The sequence is that of Glutamate--tRNA ligase from Shewanella sp. (strain MR-4).